A 617-amino-acid chain; its full sequence is Dihydroxy-acid dehydratase (617 aa).

D81 serves as a coordination point for Mg(2+). C122 lines the [2Fe-2S] cluster pocket. Mg(2+) is bound by residues D123 and K124. Position 124 is an N6-carboxylysine (K124). C195 serves as a coordination point for [2Fe-2S] cluster. E491 provides a ligand contact to Mg(2+). The active-site Proton acceptor is the S517.

The protein belongs to the IlvD/Edd family. In terms of assembly, homodimer. [2Fe-2S] cluster is required as a cofactor. Mg(2+) serves as cofactor.

The enzyme catalyses (2R)-2,3-dihydroxy-3-methylbutanoate = 3-methyl-2-oxobutanoate + H2O. It carries out the reaction (2R,3R)-2,3-dihydroxy-3-methylpentanoate = (S)-3-methyl-2-oxopentanoate + H2O. It participates in amino-acid biosynthesis; L-isoleucine biosynthesis; L-isoleucine from 2-oxobutanoate: step 3/4. The protein operates within amino-acid biosynthesis; L-valine biosynthesis; L-valine from pyruvate: step 3/4. Functionally, functions in the biosynthesis of branched-chain amino acids. Catalyzes the dehydration of (2R,3R)-2,3-dihydroxy-3-methylpentanoate (2,3-dihydroxy-3-methylvalerate) into 2-oxo-3-methylpentanoate (2-oxo-3-methylvalerate) and of (2R)-2,3-dihydroxy-3-methylbutanoate (2,3-dihydroxyisovalerate) into 2-oxo-3-methylbutanoate (2-oxoisovalerate), the penultimate precursor to L-isoleucine and L-valine, respectively. The polypeptide is Dihydroxy-acid dehydratase (Hydrogenovibrio crunogenus (strain DSM 25203 / XCL-2) (Thiomicrospira crunogena)).